We begin with the raw amino-acid sequence, 132 residues long: Z-ring associated protein G (132 aa).

Residues 1-21 (MTWEYALIGLVVGIIIGAVAM) traverse the membrane as a helical segment. Residues 95-132 (FRNRLAESEASNDQAPVQMPRDYSEGASGLLRTGAKRD) are disordered.

This sequence belongs to the ZapG family.

The protein localises to the cell inner membrane. In terms of biological role, involved in cell division, cell envelope biogenesis and cell shape maintenance. This Escherichia coli O157:H7 protein is Z-ring associated protein G.